The following is a 425-amino-acid chain: Serine--tRNA ligase (425 aa).

Position 230–232 (230–232 (TAE)) interacts with L-serine. Residue 261–263 (RSE) coordinates ATP. E284 provides a ligand contact to L-serine. Position 348–351 (348–351 (EISS)) interacts with ATP. Residue S384 participates in L-serine binding.

Belongs to the class-II aminoacyl-tRNA synthetase family. Type-1 seryl-tRNA synthetase subfamily. Homodimer. The tRNA molecule binds across the dimer.

Its subcellular location is the cytoplasm. The catalysed reaction is tRNA(Ser) + L-serine + ATP = L-seryl-tRNA(Ser) + AMP + diphosphate + H(+). It carries out the reaction tRNA(Sec) + L-serine + ATP = L-seryl-tRNA(Sec) + AMP + diphosphate + H(+). It functions in the pathway aminoacyl-tRNA biosynthesis; selenocysteinyl-tRNA(Sec) biosynthesis; L-seryl-tRNA(Sec) from L-serine and tRNA(Sec): step 1/1. In terms of biological role, catalyzes the attachment of serine to tRNA(Ser). Is also able to aminoacylate tRNA(Sec) with serine, to form the misacylated tRNA L-seryl-tRNA(Sec), which will be further converted into selenocysteinyl-tRNA(Sec). The sequence is that of Serine--tRNA ligase from Streptococcus equi subsp. zooepidemicus (strain H70).